Here is a 100-residue protein sequence, read N- to C-terminus: UPF0213 protein FN1575 (100 aa).

The 77-residue stretch at 1-77 (MAYYLYMLRC…KYIKKKKENI (77 aa)) folds into the GIY-YIG domain.

This sequence belongs to the UPF0213 family.

The sequence is that of UPF0213 protein FN1575 from Fusobacterium nucleatum subsp. nucleatum (strain ATCC 25586 / DSM 15643 / BCRC 10681 / CIP 101130 / JCM 8532 / KCTC 2640 / LMG 13131 / VPI 4355).